The primary structure comprises 182 residues: HGPRTase-like protein 1 (182 aa).

The protein belongs to the purine/pyrimidine phosphoribosyltransferase family. Archaeal HPRT subfamily.

In terms of biological role, may catalyze a purine salvage reaction, the substrate is unknown. This chain is HGPRTase-like protein 1, found in Haloarcula marismortui (strain ATCC 43049 / DSM 3752 / JCM 8966 / VKM B-1809) (Halobacterium marismortui).